We begin with the raw amino-acid sequence, 158 residues long: Interleukin-36 alpha (158 aa).

The propeptide occupies 1 to 5 (MEKAL). A 3'-nitrotyrosine modification is found at Y96.

The protein belongs to the IL-1 family. In terms of assembly, interacts with TMED10; the interaction mediates the translocation from the cytoplasm into the ERGIC (endoplasmic reticulum-Golgi intermediate compartment) and thereby secretion. In terms of processing, N-terminal truncation leads to a dramatic enhancement of its activity (&gt;1000-fold). Expressed in immune system and fetal brain, but not in other tissues tested or in multiple hematopoietic cell lines. Predominantly expressed in skin keratinocytes but not in fibroblasts, endothelial cells or melanocytes. Increased in lesional psoriasis skin.

The protein localises to the cytoplasm. It is found in the secreted. Its function is as follows. Cytokine that binds to and signals through the IL1RL2/IL-36R receptor which in turn activates NF-kappa-B and MAPK signaling pathways in target cells linked to a pro-inflammatory response. Part of the IL-36 signaling system that is thought to be present in epithelial barriers and to take part in local inflammatory response; similar to the IL-1 system with which it shares the coreceptor IL1RAP. Seems to be involved in skin inflammatory response by acting on keratinocytes, dendritic cells and indirectly on T-cells to drive tissue infiltration, cell maturation and cell proliferation. In cultured keratinocytes induces the expression of macrophage, T-cell, and neutrophil chemokines, such as CCL3, CCL4, CCL5, CCL2, CCL17, CCL22, CL20, CCL5, CCL2, CCL17, CCL22, CXCL8, CCL20 and CXCL1, and the production of pro-inflammatory cytokines such as TNF-alpha, IL-8 and IL-6. In cultured monocytes up-regulates expression of IL-1A, IL-1B and IL-6. In myeloid dendritic cells involved in cell maturation by up-regulating surface expression of CD83, CD86 and HLA-DR. In monocyte-derived dendritic cells facilitates dendritic cell maturation and drives T-cell proliferation. May play a role in pro-inflammatory effects in the lung. The chain is Interleukin-36 alpha from Homo sapiens (Human).